A 231-amino-acid chain; its full sequence is NADH-ubiquinone oxidoreductase chain 4 (231 aa).

The next 6 helical transmembrane spans lie at 1–21, 34–54, 63–85, 89–111, 128–148, and 156–176; these read PIAG…YGII, MFLP…LTCL, IAYS…TPWG, AMTL…NTTY, ILPM…AIPP, and LLIM…LGLS.

The protein belongs to the complex I subunit 4 family.

Its subcellular location is the mitochondrion membrane. The catalysed reaction is a ubiquinone + NADH + 5 H(+)(in) = a ubiquinol + NAD(+) + 4 H(+)(out). Core subunit of the mitochondrial membrane respiratory chain NADH dehydrogenase (Complex I) that is believed to belong to the minimal assembly required for catalysis. Complex I functions in the transfer of electrons from NADH to the respiratory chain. The immediate electron acceptor for the enzyme is believed to be ubiquinone. The chain is NADH-ubiquinone oxidoreductase chain 4 (MT-ND4) from Gloydius intermedius (Central Asian pit viper).